We begin with the raw amino-acid sequence, 296 residues long: Protease HtpX homolog (296 aa).

2 helical membrane passes run 14–34 (VFLL…VGYL) and 38–58 (SLVT…VIMI). Residue His-144 coordinates Zn(2+). The active site involves Glu-145. His-148 lines the Zn(2+) pocket. 2 consecutive transmembrane segments (helical) span residues 159–179 (IALA…NWWL) and 198–218 (LLVF…AAVI). Glu-227 provides a ligand contact to Zn(2+).

Belongs to the peptidase M48B family. Zn(2+) is required as a cofactor.

It localises to the cell membrane. This Leuconostoc citreum (strain KM20) protein is Protease HtpX homolog.